The sequence spans 278 residues: Pantothenate synthetase (278 aa).

27–34 lines the ATP pocket; that stretch reads MGYLHEGH. The Proton donor role is filled by His-34. Gln-58 is a (R)-pantoate binding site. Residue Gln-58 coordinates beta-alanine. Position 144-147 (144-147) interacts with ATP; sequence GQKD. Position 150 (Gln-150) interacts with (R)-pantoate. Residues Val-173 and 181-184 each bind ATP; that span reads MSSR.

It belongs to the pantothenate synthetase family. In terms of assembly, homodimer.

Its subcellular location is the cytoplasm. It catalyses the reaction (R)-pantoate + beta-alanine + ATP = (R)-pantothenate + AMP + diphosphate + H(+). It functions in the pathway cofactor biosynthesis; (R)-pantothenate biosynthesis; (R)-pantothenate from (R)-pantoate and beta-alanine: step 1/1. Its function is as follows. Catalyzes the condensation of pantoate with beta-alanine in an ATP-dependent reaction via a pantoyl-adenylate intermediate. The chain is Pantothenate synthetase from Roseiflexus sp. (strain RS-1).